A 50-amino-acid polypeptide reads, in one-letter code: MAVPKRRKSRSNTRHRRSQWKAAAPDLVPIVVDGERRLVPRPLVRYFQQG.

Positions 1–19 (MAVPKRRKSRSNTRHRRSQ) are enriched in basic residues. Positions 1–21 (MAVPKRRKSRSNTRHRRSQWK) are disordered.

It belongs to the bacterial ribosomal protein bL32 family.

The protein is Large ribosomal subunit protein bL32A of Saccharopolyspora erythraea (strain ATCC 11635 / DSM 40517 / JCM 4748 / NBRC 13426 / NCIMB 8594 / NRRL 2338).